Here is a 169-residue protein sequence, read N- to C-terminus: Hydroperoxy fatty acid reductase gpx1 (169 aa).

Cys41 is an active-site residue.

This sequence belongs to the glutathione peroxidase family. Monomer.

The catalysed reaction is a hydroperoxy polyunsaturated fatty acid + NADPH + H(+) = a hydroxy polyunsaturated fatty acid + NADP(+) + H2O. Its activity is regulated as follows. Mercaptosuccinate, pCMB, and nethylmaleimide act as inhibitors of the catalytic activity. Hydroperoxy fatty acid reductase essential for the removal of lipid hydroperoxides under normal and stress conditions, leading to the protection of membrane integrity. This chain is Hydroperoxy fatty acid reductase gpx1 (gpx1), found in Synechocystis sp. (strain ATCC 27184 / PCC 6803 / Kazusa).